A 313-amino-acid polypeptide reads, in one-letter code: Porphobilinogen deaminase (313 aa).

Position 241 is an S-(dipyrrolylmethanemethyl)cysteine (cysteine 241).

The protein belongs to the HMBS family. In terms of assembly, monomer. Dipyrromethane serves as cofactor.

The catalysed reaction is 4 porphobilinogen + H2O = hydroxymethylbilane + 4 NH4(+). The protein operates within porphyrin-containing compound metabolism; protoporphyrin-IX biosynthesis; coproporphyrinogen-III from 5-aminolevulinate: step 2/4. It functions in the pathway porphyrin-containing compound metabolism; chlorophyll biosynthesis. Functionally, tetrapolymerization of the monopyrrole PBG into the hydroxymethylbilane pre-uroporphyrinogen in several discrete steps. The chain is Porphobilinogen deaminase from Chlorobium phaeobacteroides (strain BS1).